The following is a 211-amino-acid chain: 2,3-bisphosphoglycerate-dependent phosphoglycerate mutase (211 aa).

Residues 9–16, 22–23, arginine 61, 88–91, lysine 99, 115–116, and 159–160 each bind substrate; these read RHGQSDWN, TG, ERDY, RR, and GN. Histidine 10 (tele-phosphohistidine intermediate) is an active-site residue. Glutamate 88 acts as the Proton donor/acceptor in catalysis.

The protein belongs to the phosphoglycerate mutase family. BPG-dependent PGAM subfamily. In terms of assembly, homodimer.

It carries out the reaction (2R)-2-phosphoglycerate = (2R)-3-phosphoglycerate. The protein operates within carbohydrate degradation; glycolysis; pyruvate from D-glyceraldehyde 3-phosphate: step 3/5. Its function is as follows. Catalyzes the interconversion of 2-phosphoglycerate and 3-phosphoglycerate. In Allorhizobium ampelinum (strain ATCC BAA-846 / DSM 112012 / S4) (Agrobacterium vitis (strain S4)), this protein is 2,3-bisphosphoglycerate-dependent phosphoglycerate mutase.